The following is a 259-amino-acid chain: Tegument protein UL51 homolog (259 aa).

The S-palmitoyl cysteine; by host moiety is linked to residue C9.

It belongs to the herpesviridae UL51 family. In terms of assembly, oligomerizes. Interacts with ORF53; this interaction mediates ORF53 incorporation to virions. In terms of processing, phosphorylated. Palmitoylation is necessary for Golgi localization.

The protein resides in the virion tegument. It localises to the host cytoplasm. The protein localises to the host Golgi apparatus. In terms of biological role, plays several roles during the time course of infection, including egress of virus particles from the perinuclear space and secondary envelopment of cytoplasmic capsids that bud into specific trans-Golgi network (TGN)-derived membranes. The sequence is that of Tegument protein UL51 homolog from Varicella-zoster virus (strain Dumas) (HHV-3).